Here is a 498-residue protein sequence, read N- to C-terminus: Trehalose-6-phosphate synthase (498 aa).

D-glucose 6-phosphate is bound at residue arginine 28. 48-49 (GG) contacts UDP-alpha-D-glucose. D-glucose 6-phosphate-binding residues include tyrosine 106 and aspartate 160. UDP-alpha-D-glucose-binding residues include arginine 302 and lysine 307. Arginine 340 is a D-glucose 6-phosphate binding site. 405–409 (LVAKE) provides a ligand contact to UDP-alpha-D-glucose.

Belongs to the glycosyltransferase 20 family. Homotetramer.

It carries out the reaction ADP-alpha-D-glucose + D-glucose 6-phosphate = alpha,alpha-trehalose 6-phosphate + ADP + H(+). It catalyses the reaction CDP-alpha-D-glucose + D-glucose 6-phosphate = alpha,alpha-trehalose 6-phosphate + CDP + H(+). The catalysed reaction is GDP-alpha-D-glucose + D-glucose 6-phosphate = alpha,alpha-trehalose 6-phosphate + GDP + H(+). The enzyme catalyses TDP-alpha-D-glucose + D-glucose 6-phosphate = 5-methyl-UDP + alpha,alpha-trehalose 6-phosphate + H(+). It carries out the reaction D-glucose 6-phosphate + UDP-alpha-D-glucose = alpha,alpha-trehalose 6-phosphate + UDP + H(+). It participates in glycan biosynthesis; trehalose biosynthesis. Probably involved in the osmoprotection via the biosynthesis of trehalose and in the production of glycogen and alpha-glucan via the TreS-Pep2 branch involved in the biosynthesis of maltose-1-phosphate (M1P). Catalyzes the transfer of glucose from UDP-glucose (UDP-Glc) to D-glucose 6-phosphate (Glc-6-P) to form trehalose-6-phosphate. Probably also able to use ADP-Glc, CDP-Glc, GDP-Glc and TDP-Glc as glucosyl donors. The chain is Trehalose-6-phosphate synthase from Mycobacterium leprae (strain TN).